The primary structure comprises 450 residues: Ceramide glucosyltransferase (450 aa).

Residues Met1 to Ser8 lie on the Lumenal side of the membrane. Residues Leu9–Gly29 traverse the membrane as a helical segment. Over Trp30–Ala337 the chain is Cytoplasmic. A short sequence motif (D1) is located at residue Asp96. Asp148 is a short sequence motif (D2). Residue Asp286 is a short sequence motif, D3. Asp286 serves as the catalytic Proton acceptor. Residues Arg323–Trp327 carry the (Q/R)XXRW motif. The helical transmembrane segment at Ala338–Ile358 threads the bilayer. The Lumenal segment spans residues Ser359–Leu361. The helical transmembrane segment at Leu362 to Ile382 threads the bilayer. The Cytoplasmic portion of the chain corresponds to Ser383 to Lys401. A helical transmembrane segment spans residues Val402–Ala422. Over Met423 to Asn450 the chain is Lumenal.

Belongs to the glycosyltransferase 2 family.

It localises to the golgi apparatus membrane. It carries out the reaction an N-acylsphing-4-enine + UDP-alpha-D-glucose = a beta-D-glucosyl-(1&lt;-&gt;1')-N-acylsphing-4-enine + UDP + H(+). The protein operates within lipid metabolism; sphingolipid metabolism. Catalyzes the final step in the biosynthesis of the membrane lipid glucosylceramide (GluCer), the transfer of glucose to ceramide. Glucosylceramides play important roles in growth, differentiation and pathogenicity. Essential factor in determining the success of fungal infection by regulating survival of yeast cells during the initial colonization of the host lung. The sequence is that of Ceramide glucosyltransferase from Cryptococcus neoformans var. grubii serotype A (strain H99 / ATCC 208821 / CBS 10515 / FGSC 9487) (Filobasidiella neoformans var. grubii).